The sequence spans 580 residues: MNNYGVSSIGTSLTPSPTGSIDEYTSKEVKHPEDVKVDASYEKEEVGYGELEVVPERGNLFQRWYRSFLPPEDGKPQKLKRTLTARHIQMIGIGGAIGTGVWVGSKNTLREGGAASVLICYSLVGSMVLMTVYSLGELAVAFPINGSFHTYGTRFIHPSWGFTLGWNYLASFLATYPLELITASICLQFWININSGIWITVFIALLCFVNMFGVRGYGEVEFFVSSLKVMAMVGFIICGIVIDCGGVRTDHRGYIGATIFRKNAFIHGFHGFCSVFSTAAFSYAGTEYIGIAASETKNPAKAFPKAVKQVFIRVSLFYILALFVVSLLISGRDERLTTLSATAASPFILALMDAKIRGLPHVLNAVILISVLTAANGITYTGSRTLHSMAEQGHAPKWFKYVDREGRPLLAMAFVLCFGALGYICESAQSDTVFDWLLSISNLATLFVWLSINVSYIIYRLAFKKQGKSYDEVGYHSPFGIYGACYGAFIIILVFITEFYVSIFPIGASPDAGAFFQSYLCFPVVVIVFIAHALITRQKFRKLSEIDLDTGFSKYDRLEESDKGPMTAKSLAKSVLSFCV.

A compositionally biased stretch (polar residues) spans Met-1–Gly-19. The tract at residues Met-1 to Lys-30 is disordered. 8 consecutive transmembrane segments (helical) span residues Gly-112–Val-132, Phe-189–Val-209, Phe-222–Ile-242, Val-310–Ser-330, Pro-408–Ala-428, Thr-432–Ile-452, Ala-488–Ala-508, and Phe-515–Ile-535.

The protein belongs to the amino acid-polyamine-organocation (APC) superfamily.

The protein resides in the membrane. The protein is Sexual differentiation process putative amino-acid permease isp5 (isp5) of Schizosaccharomyces pombe (strain 972 / ATCC 24843) (Fission yeast).